The sequence spans 217 residues: 7-cyano-7-deazaguanine synthase (217 aa).

Phe10–Leu20 is a binding site for ATP. The Zn(2+) site is built by Cys185, Cys194, Cys197, and Cys200.

The protein belongs to the QueC family. In terms of assembly, homodimer. Requires Zn(2+) as cofactor.

The catalysed reaction is 7-carboxy-7-deazaguanine + NH4(+) + ATP = 7-cyano-7-deazaguanine + ADP + phosphate + H2O + H(+). Its pathway is purine metabolism; 7-cyano-7-deazaguanine biosynthesis. Its function is as follows. Catalyzes the ATP-dependent conversion of 7-carboxy-7-deazaguanine (CDG) to 7-cyano-7-deazaguanine (preQ(0)). This chain is 7-cyano-7-deazaguanine synthase, found in Streptococcus thermophilus (strain CNRZ 1066).